We begin with the raw amino-acid sequence, 584 residues long: Leucine-rich repeat and fibronectin type III domain-containing protein 1 (584 aa).

The first 17 residues, 1–17, serve as a signal peptide directing secretion; that stretch reads MERLVFCVLVFGALAKA. An LRRNT domain is found at 18–51; sequence QLCPGRCICQTISPTLTLLCAKTGLLFVPPTVDR. The Extracellular portion of the chain corresponds to 18-494; it reads QLCPGRCICQ…VPSQFLGGTM (477 aa). 7 LRR repeats span residues 52–73, 76–97, 100–121, 124–145, 149–170, 173–194, and 197–218; these read KTVE…DFLN, SLVH…AFMG, SLRA…QLKG, NLRH…SFDE, TIED…AIAR, NINT…TFTL, and KLVR…TLFQ. The N-linked (GlcNAc...) asparagine glycan is linked to Asn-73. The LRRCT domain occupies 241–287; it reads NPLHCNCELLWLRRLTREDDLETCASPEHLMDKYFWSIQEEEFICEP. Residues 288-375 form the Ig-like domain; the sequence is PLITKHQVTK…GIATAAVHVH (88 aa). An intrachain disulfide couples Cys-310 to Cys-359. N-linked (GlcNAc...) asparagine glycans are attached at residues Asn-332, Asn-341, Asn-384, Asn-408, and Asn-421. Residues 393–414 form a disordered region; the sequence is DPGLSDISTSSRSSSNDSKTHS. A compositionally biased stretch (low complexity) spans 397 to 409; that stretch reads SDISTSSRSSSND. The chain crosses the membrane as a helical span at residues 495-515; it reads IIIIGGIIVASVLVFIIILMI. At 516–584 the chain is on the cytoplasmic side; the sequence is RYKAYSGGGG…MVLPILHLLF (69 aa). A disordered region spans residues 539-564; that stretch reads HVHSQTNGSRSAATKQSEEPPESPAG. Residues 540–553 are compositionally biased toward polar residues; it reads VHSQTNGSRSAATK.

The protein belongs to the LRFN family.

The protein resides in the membrane. Its subcellular location is the synapse. Its function is as follows. Involved in the regulation of excitatory synapses. This Danio rerio (Zebrafish) protein is Leucine-rich repeat and fibronectin type III domain-containing protein 1 (lrfn1).